The sequence spans 189 residues: Histidinol-phosphate aminotransferase (189 aa).

Belongs to the class-II pyridoxal-phosphate-dependent aminotransferase family. Histidinol-phosphate aminotransferase subfamily. Homodimer. Pyridoxal 5'-phosphate is required as a cofactor.

The catalysed reaction is L-histidinol phosphate + 2-oxoglutarate = 3-(imidazol-4-yl)-2-oxopropyl phosphate + L-glutamate. The protein operates within amino-acid biosynthesis; L-histidine biosynthesis; L-histidine from 5-phospho-alpha-D-ribose 1-diphosphate: step 7/9. In Thiocapsa roseopersicina, this protein is Histidinol-phosphate aminotransferase (hisC).